We begin with the raw amino-acid sequence, 388 residues long: N-acetylneuraminate epimerase (388 aa).

The N-terminal stretch at 1–26 is a signal peptide; it reads MFSLIGAKRQAIGIAALAWSTGAVMA. Kelch repeat units lie at residues 48–92, 94–147, 149–186, 187–232, 236–285, 307–356, and 358–387; these read MAYV…AAAG, KIFA…VGLA, GRIA…KLVD, SYMG…ATMG, FLLV…VAGA, ANAA…DAPG, and LLVV…LSVE.

Belongs to the NanM family. As to quaternary structure, homodimer.

The protein resides in the periplasm. It catalyses the reaction N-acetyl-alpha-neuraminate = N-acetyl-beta-neuraminate. Converts alpha-N-acetylneuranimic acid (Neu5Ac) to the beta-anomer, accelerating the equilibrium between the alpha- and beta-anomers. Probably facilitates sialidase-negative bacteria to compete successfully for limited amounts of extracellular Neu5Ac, which is likely taken up in the beta-anomer. In addition, the rapid removal of sialic acid from solution might be advantageous to the bacterium to damp down host responses. This Brucella suis (strain ATCC 23445 / NCTC 10510) protein is N-acetylneuraminate epimerase.